The primary structure comprises 519 residues: Cilia- and flagella-associated protein 53 (519 aa).

Coiled coils occupy residues 80–107 (NRHL…LLES) and 210–339 (LAKE…QEEQ). Residues 498–519 (TTAVHPFRRRDRRCSSSGGQMS) form a disordered region.

This sequence belongs to the CFAP53 family.

Its subcellular location is the cytoplasm. The protein resides in the cytoskeleton. The protein localises to the cilium axoneme. It is found in the cilium basal body. Its function is as follows. Microtubule inner protein (MIP) part of the dynein-decorated doublet microtubules (DMTs) in cilia axoneme, which is required for motile cilia beating. Regulates motility patterns of both 9+0 and 9+2 motile cilia through differential localization and recruitment of axonemal dynein components. Required for cilium motility within the spinal canal and Kuppfer's vesicle and is involved in the establishment of left-right symmetry during embryogenesis. The sequence is that of Cilia- and flagella-associated protein 53 from Danio rerio (Zebrafish).